We begin with the raw amino-acid sequence, 265 residues long: Speedy protein E12 (265 aa).

The disordered stretch occupies residues 1 to 80 (MGQILGKIMM…EPEKELAPEP (80 aa)). Positions 13-23 (QPQPQEEQSPQ) are enriched in low complexity. Acidic residues predominate over residues 66–80 (DESDDEPEKELAPEP).

Belongs to the Speedy/Ringo family.

This is Speedy protein E12 from Homo sapiens (Human).